The chain runs to 119 residues: Large ribosomal subunit protein uL18 (119 aa).

The protein belongs to the universal ribosomal protein uL18 family. Part of the 50S ribosomal subunit; part of the 5S rRNA/L5/L18/L25 subcomplex. Contacts the 5S and 23S rRNAs.

In terms of biological role, this is one of the proteins that bind and probably mediate the attachment of the 5S RNA into the large ribosomal subunit, where it forms part of the central protuberance. This Dinoroseobacter shibae (strain DSM 16493 / NCIMB 14021 / DFL 12) protein is Large ribosomal subunit protein uL18.